The chain runs to 365 residues: N5-carboxyaminoimidazole ribonucleotide synthase (365 aa).

ATP contacts are provided by residues Arg-93, Lys-132, 137–143 (GYDGKGQ), 168–171 (EEFV), Glu-176, His-199, and 249–250 (NE). Residues 97-279 (KLFLKKHGFP…QFENLLRAIT (183 aa)) enclose the ATP-grasp domain.

This sequence belongs to the PurK/PurT family. Homodimer.

It catalyses the reaction 5-amino-1-(5-phospho-beta-D-ribosyl)imidazole + hydrogencarbonate + ATP = 5-carboxyamino-1-(5-phospho-D-ribosyl)imidazole + ADP + phosphate + 2 H(+). The protein operates within purine metabolism; IMP biosynthesis via de novo pathway; 5-amino-1-(5-phospho-D-ribosyl)imidazole-4-carboxylate from 5-amino-1-(5-phospho-D-ribosyl)imidazole (N5-CAIR route): step 1/2. Its function is as follows. Catalyzes the ATP-dependent conversion of 5-aminoimidazole ribonucleotide (AIR) and HCO(3)(-) to N5-carboxyaminoimidazole ribonucleotide (N5-CAIR). This Aquifex aeolicus (strain VF5) protein is N5-carboxyaminoimidazole ribonucleotide synthase.